Here is a 205-residue protein sequence, read N- to C-terminus: SREBP regulating gene protein (205 aa).

Residues 1 to 16 (MVNLAAMVWRRLLRKR) lie on the Cytoplasmic side of the membrane. The helical transmembrane segment at 17–35 (WVLALVFGLSLVYFLTSTF) threads the bilayer. The Lumenal segment spans residues 36-205 (KQEERAVRDR…GESPPELFPA (170 aa)). The N-linked (GlcNAc...) asparagine glycan is linked to asparagine 67.

It belongs to the SPRING family. In terms of assembly, interacts with SCAP.

The protein localises to the golgi apparatus membrane. In terms of biological role, positively regulates hepatic SREBP signaling pathway by modulating the proper localization of SCAP (SREBP cleavage-activating protein) to the endoplasmic reticulum, thereby controlling the level of functional SCAP. This chain is SREBP regulating gene protein, found in Bos taurus (Bovine).